The primary structure comprises 177 residues: Large ribosomal subunit protein uL6 (177 aa).

This sequence belongs to the universal ribosomal protein uL6 family. As to quaternary structure, part of the 50S ribosomal subunit.

This protein binds to the 23S rRNA, and is important in its secondary structure. It is located near the subunit interface in the base of the L7/L12 stalk, and near the tRNA binding site of the peptidyltransferase center. This chain is Large ribosomal subunit protein uL6, found in Serratia proteamaculans (strain 568).